The primary structure comprises 406 residues: Imidazolonepropionase (406 aa).

Residues H72 and H74 each coordinate Fe(3+). Residues H72 and H74 each coordinate Zn(2+). 4-imidazolone-5-propanoate-binding residues include R81, Y144, and H177. Y144 is a binding site for N-formimidoyl-L-glutamate. Fe(3+) is bound at residue H242. Position 242 (H242) interacts with Zn(2+). Q245 contributes to the 4-imidazolone-5-propanoate binding site. D317 contributes to the Fe(3+) binding site. Zn(2+) is bound at residue D317. Residues N319 and G321 each coordinate N-formimidoyl-L-glutamate. T322 lines the 4-imidazolone-5-propanoate pocket.

This sequence belongs to the metallo-dependent hydrolases superfamily. HutI family. It depends on Zn(2+) as a cofactor. Requires Fe(3+) as cofactor.

It localises to the cytoplasm. It catalyses the reaction 4-imidazolone-5-propanoate + H2O = N-formimidoyl-L-glutamate. It functions in the pathway amino-acid degradation; L-histidine degradation into L-glutamate; N-formimidoyl-L-glutamate from L-histidine: step 3/3. Its function is as follows. Catalyzes the hydrolytic cleavage of the carbon-nitrogen bond in imidazolone-5-propanoate to yield N-formimidoyl-L-glutamate. It is the third step in the universal histidine degradation pathway. The protein is Imidazolonepropionase of Yersinia enterocolitica serotype O:8 / biotype 1B (strain NCTC 13174 / 8081).